Here is a 296-residue protein sequence, read N- to C-terminus: PYK10-binding protein 2 (296 aa).

The disordered stretch occupies residues 1 to 20 (MAQKVEAKGGKGGNQWDDGS). Alanine 2 carries the N-acetylalanine modification. 2 consecutive Jacalin-type lectin domains span residues 2-142 (AQKV…YFAP) and 150-293 (AKPL…HVRP).

It belongs to the jacalin lectin family. As to quaternary structure, component of the PYK10 complex, at least composed of PYK10/BGLU23, BGLU21, BGLU22, JAL22, JAL23, PBP1/JAL30, PBP2/JAL31, JAL32, JAL33, JAL34, JAL35, GLL22 and GLL23.

Its function is as follows. Polymerizer-type lectin that may facilitate the correct polymerization of BGLU23/PYK10 upon tissue damage. Activates BGLU21, BGLU22 and BGLU23. The sequence is that of PYK10-binding protein 2 (PBP2) from Arabidopsis thaliana (Mouse-ear cress).